The following is a 265-amino-acid chain: GTP cyclohydrolase 1 type 2 homolog (265 aa).

A divalent metal cation-binding residues include H65, D103, H225, and E228.

It belongs to the GTP cyclohydrolase I type 2/NIF3 family. Homohexamer.

The chain is GTP cyclohydrolase 1 type 2 homolog from Streptococcus pneumoniae serotype 4 (strain ATCC BAA-334 / TIGR4).